The following is an 89-amino-acid chain: Sugar transporter SemiSWEET (89 aa).

Transmembrane regions (helical) follow at residues 4-27 (ILLT…IKTI), 35-55 (ISVV…AYGI), and 60-82 (FAVL…ITLI). The PQ-loop domain occupies 7–59 (TGLFAAFFTTFAFAPQSIKTIRTRNTEGISVVMYIMFLTGVISWIAYGIMRSD).

In terms of assembly, homodimer.

The protein resides in the cell membrane. Its function is as follows. The homodimer mediates transmembrane sugar transport down a concentration gradient. Transport is probably effected by rocking-type movements, where a cargo-binding cavity opens first on one and then on the other side of the membrane. This is Sugar transporter SemiSWEET from Escherichia coli (strain UMEA 3162-1).